A 174-amino-acid polypeptide reads, in one-letter code: Large ribosomal subunit protein uL18 (174 aa).

The protein belongs to the universal ribosomal protein uL18 family. Part of the 50S ribosomal subunit. Contacts the 5S and 23S rRNAs.

In terms of biological role, this is one of the proteins that bind and probably mediate the attachment of the 5S RNA into the large ribosomal subunit, where it forms part of the central protuberance. The sequence is that of Large ribosomal subunit protein uL18 from Methanosarcina acetivorans (strain ATCC 35395 / DSM 2834 / JCM 12185 / C2A).